The sequence spans 224 residues: Glutathione S-transferase U4 (224 aa).

Residues 6 to 85 (EDVKLLGFWA…YIDQIWKNNP (80 aa)) form the GST N-terminal domain. Residues 16–17 (SP), 42–43 (NK), 56–57 (KV), and 69–70 (ES) each bind glutathione. Residues 90-217 (DPYEKAMALF…EEQIEHMKKV (128 aa)) form the GST C-terminal domain. A Phosphothreonine modification is found at threonine 151.

This sequence belongs to the GST superfamily. Tau family.

The protein localises to the cytoplasm. Its subcellular location is the cytosol. It catalyses the reaction RX + glutathione = an S-substituted glutathione + a halide anion + H(+). Functionally, may be involved in the conjugation of reduced glutathione to a wide number of exogenous and endogenous hydrophobic electrophiles and have a detoxification role against certain herbicides. This chain is Glutathione S-transferase U4 (GSTU4), found in Arabidopsis thaliana (Mouse-ear cress).